Consider the following 51-residue polypeptide: DNA-directed RNA polymerases II, IV and V subunit 12 (51 aa).

Residues cysteine 12, cysteine 15, cysteine 29, and cysteine 32 each coordinate Zn(2+).

The protein belongs to the archaeal Rpo12/eukaryotic RPC10 RNA polymerase subunit family. As to quaternary structure, component of the RNA polymerase II, IV and V complexes. Associates with the mediator complex. Interacts with NRPD1.

Its subcellular location is the nucleus. Functionally, DNA-dependent RNA polymerase catalyzes the transcription of DNA into RNA using the four ribonucleoside triphosphates as substrates. Component of RNA polymerase II which synthesizes mRNA precursors and many functional non-coding RNAs. Pol II is the central component of the basal RNA polymerase II transcription machinery. It is composed of mobile elements that move relative to each other. Component of RNA polymerases IV and V which mediate short-interfering RNAs (siRNA) accumulation and subsequent RNA-directed DNA methylation-dependent (RdDM) transcriptional gene silencing (TGS) of endogenous repeated sequences, including transposable elements. This Arabidopsis thaliana (Mouse-ear cress) protein is DNA-directed RNA polymerases II, IV and V subunit 12 (NRPB12).